A 199-amino-acid polypeptide reads, in one-letter code: Octanoyltransferase (199 aa).

The 173-residue stretch at 27–199 (SNSCDELWLL…FVQYFLTQFK (173 aa)) folds into the BPL/LPL catalytic domain. Substrate is bound by residues 66-73 (RGGQVTYH), 133-135 (SIG), and 146-148 (GIA). The active-site Acyl-thioester intermediate is the Cys164.

This sequence belongs to the LipB family.

It localises to the cytoplasm. The catalysed reaction is octanoyl-[ACP] + L-lysyl-[protein] = N(6)-octanoyl-L-lysyl-[protein] + holo-[ACP] + H(+). It functions in the pathway protein modification; protein lipoylation via endogenous pathway; protein N(6)-(lipoyl)lysine from octanoyl-[acyl-carrier-protein]: step 1/2. Its function is as follows. Catalyzes the transfer of endogenously produced octanoic acid from octanoyl-acyl-carrier-protein onto the lipoyl domains of lipoate-dependent enzymes. Lipoyl-ACP can also act as a substrate although octanoyl-ACP is likely to be the physiological substrate. This is Octanoyltransferase from Legionella pneumophila (strain Corby).